Reading from the N-terminus, the 437-residue chain is Glutamate-1-semialdehyde 2,1-aminomutase (437 aa).

At Lys274 the chain carries N6-(pyridoxal phosphate)lysine.

The protein belongs to the class-III pyridoxal-phosphate-dependent aminotransferase family. HemL subfamily. In terms of assembly, homodimer. Pyridoxal 5'-phosphate is required as a cofactor.

It is found in the cytoplasm. The catalysed reaction is (S)-4-amino-5-oxopentanoate = 5-aminolevulinate. The protein operates within porphyrin-containing compound metabolism; protoporphyrin-IX biosynthesis; 5-aminolevulinate from L-glutamyl-tRNA(Glu): step 2/2. The sequence is that of Glutamate-1-semialdehyde 2,1-aminomutase from Leptothrix cholodnii (strain ATCC 51168 / LMG 8142 / SP-6) (Leptothrix discophora (strain SP-6)).